A 392-amino-acid chain; its full sequence is Phosphoglycerate kinase (392 aa).

Residues 21-23 (DFN), Arg36, 59-62 (HLGR), Arg118, and Arg151 contribute to the substrate site. Residues Lys201, Gly292, Glu323, and 349-352 (GGDS) contribute to the ATP site.

It belongs to the phosphoglycerate kinase family. As to quaternary structure, monomer.

Its subcellular location is the cytoplasm. It catalyses the reaction (2R)-3-phosphoglycerate + ATP = (2R)-3-phospho-glyceroyl phosphate + ADP. Its pathway is carbohydrate degradation; glycolysis; pyruvate from D-glyceraldehyde 3-phosphate: step 2/5. The polypeptide is Phosphoglycerate kinase (Borrelia turicatae (strain 91E135)).